Consider the following 185-residue polypeptide: Elongation factor P (185 aa).

This sequence belongs to the elongation factor P family.

The protein resides in the cytoplasm. It functions in the pathway protein biosynthesis; polypeptide chain elongation. In terms of biological role, involved in peptide bond synthesis. Stimulates efficient translation and peptide-bond synthesis on native or reconstituted 70S ribosomes in vitro. Probably functions indirectly by altering the affinity of the ribosome for aminoacyl-tRNA, thus increasing their reactivity as acceptors for peptidyl transferase. The polypeptide is Elongation factor P (efp) (Synechococcus elongatus (strain ATCC 33912 / PCC 7942 / FACHB-805) (Anacystis nidulans R2)).